Consider the following 220-residue polypeptide: UPF0319 protein YccT (220 aa).

The signal sequence occupies residues 1–20 (MKTGALATFLALCLPVTVFA).

This sequence belongs to the UPF0319 family.

The chain is UPF0319 protein YccT from Salmonella paratyphi A (strain ATCC 9150 / SARB42).